Here is a 527-residue protein sequence, read N- to C-terminus: RUS family member 1 (527 aa).

An N-linked (GlcNAc...) asparagine glycan is attached at N21. The helical transmembrane segment at 220 to 240 threads the bilayer; it reads SQETAVNLVGMLLSVIVSSFI. N-linked (GlcNAc...) asparagine glycosylation is present at N243. Residues 245 to 265 form a helical membrane-spanning segment; it reads SLIVTWLVFLFFTSLHLFCNY. An N-linked (GlcNAc...) asparagine glycan is attached at N346. Positions 350 to 426 are disordered; it reads TKNVNNNNNN…NNNNNNNNNK (77 aa). 2 N-linked (GlcNAc...) asparagine glycosylation sites follow: N467 and N497.

Belongs to the RUS1 family.

The protein resides in the membrane. This chain is RUS family member 1 (rusf1), found in Dictyostelium discoideum (Social amoeba).